The primary structure comprises 303 residues: MEFWGLEVKPGSTVKCEPGHGFILHVSQAALGESKKSDSALMYVKVDDKKLAIGTLSIDKYPQIQFDLVFNKEFELSHTSKTTSVFFSGYKVEQPIEGDEMDLDSEDEEEELNIPVIKENGKADGKEEQKNQEKAVAATASKSSLGLEKKSKDDSDDSDEDESDDSDEDDSDDSDEGEGLSPDEGDDDSSDEDDTSDDDEEETPTPKKPEAGKKRGAENALKTPLSDKKAKVATPPAQKTGGKKGATHVATPHPAKGKTPANNDKLTEKSPKSGGSVPCKSCSKTFNSEMALQAHSKAKHGAK.

A compositionally biased stretch (acidic residues) spans 100–112 (EMDLDSEDEEEEL). The disordered stretch occupies residues 100–282 (EMDLDSEDEE…SGGSVPCKSC (183 aa)). Basic and acidic residues predominate over residues 119–133 (ENGKADGKEEQKNQE). Positions 154–203 (DSDDSDEDESDDSDEDDSDDSDEGEGLSPDEGDDDSSDEDDTSDDDEEET) are enriched in acidic residues. Residues 204-217 (PTPKKPEAGKKRGA) show a composition bias toward basic and acidic residues. The segment at 277 to 300 (VPCKSCSKTFNSEMALQAHSKAKH) adopts a C2H2-type zinc-finger fold.

The protein belongs to the histone deacetylase HD2 family. As to quaternary structure, multimer. Possibly forms a homotrimer with HDT1 and/or HDT3.

The protein resides in the nucleus. The protein localises to the nucleolus. Its function is as follows. Mediates the deacetylation of lysine residues on the N-terminal part of the core histones (H2A, H2B, H3 and H4). Histone deacetylation gives a tag for epigenetic repression and plays an important role in transcriptional regulation, cell cycle progression and developmental events. This chain is Histone deacetylase HDT2 (HDT2), found in Zea mays (Maize).